A 376-amino-acid polypeptide reads, in one-letter code: Endoplasmic reticulum-Golgi intermediate compartment protein 2 (376 aa).

Topologically, residues 1–33 (MRRLNKKKALNFVRELDAFPKVPESYVETTASG) are cytoplasmic. A helical membrane pass occupies residues 34–54 (GTVSLLAFTAMALLAFFEFFV). The Lumenal portion of the chain corresponds to 55–318 (YRDTWMKYEY…PFWQFLVRLC (264 aa)). A helical membrane pass occupies residues 319-339 (GIIGGIFSTTGMLHNLVGFCV). Residues 340–376 (DVVCCRFKLGVYKPKSMSDFDGQINSLTPLLSENAEQ) lie on the Cytoplasmic side of the membrane.

It belongs to the ERGIC family.

It localises to the endoplasmic reticulum-Golgi intermediate compartment membrane. It is found in the golgi apparatus. Its subcellular location is the cis-Golgi network membrane. The protein localises to the endoplasmic reticulum membrane. Functionally, possible role in transport between endoplasmic reticulum and Golgi. This is Endoplasmic reticulum-Golgi intermediate compartment protein 2 (ergic2) from Danio rerio (Zebrafish).